Here is a 215-residue protein sequence, read N- to C-terminus: Small ribosomal subunit protein eS1 (215 aa).

The disordered stretch occupies residues 195–215 (SGMQEPQKNEPAPGGEAIAQN).

Belongs to the eukaryotic ribosomal protein eS1 family.

This Thermoplasma acidophilum (strain ATCC 25905 / DSM 1728 / JCM 9062 / NBRC 15155 / AMRC-C165) protein is Small ribosomal subunit protein eS1.